The sequence spans 450 residues: Bifunctional protein GlmU (450 aa).

The tract at residues 1 to 229 (MRRHAIILAA…VEEIMGVNDR (229 aa)) is pyrophosphorylase. Residues 8–11 (LAAG), K22, Q72, and 77–78 (GT) contribute to the UDP-N-acetyl-alpha-D-glucosamine site. Residue D102 participates in Mg(2+) binding. Positions 139, 154, and 227 each coordinate UDP-N-acetyl-alpha-D-glucosamine. N227 contacts Mg(2+). The interval 230-250 (VMLSQAENAMQRRTNHYHMLN) is linker. Residues 251–450 (GVTIIDPDST…RQTTKEGYRK (200 aa)) are N-acetyltransferase. Positions 332 and 350 each coordinate UDP-N-acetyl-alpha-D-glucosamine. H362 (proton acceptor) is an active-site residue. Y365 and N376 together coordinate UDP-N-acetyl-alpha-D-glucosamine. Acetyl-CoA-binding positions include 385–386 (NY), A422, and R439.

In the N-terminal section; belongs to the N-acetylglucosamine-1-phosphate uridyltransferase family. It in the C-terminal section; belongs to the transferase hexapeptide repeat family. As to quaternary structure, homotrimer. Requires Mg(2+) as cofactor.

Its subcellular location is the cytoplasm. The enzyme catalyses alpha-D-glucosamine 1-phosphate + acetyl-CoA = N-acetyl-alpha-D-glucosamine 1-phosphate + CoA + H(+). The catalysed reaction is N-acetyl-alpha-D-glucosamine 1-phosphate + UTP + H(+) = UDP-N-acetyl-alpha-D-glucosamine + diphosphate. It functions in the pathway nucleotide-sugar biosynthesis; UDP-N-acetyl-alpha-D-glucosamine biosynthesis; N-acetyl-alpha-D-glucosamine 1-phosphate from alpha-D-glucosamine 6-phosphate (route II): step 2/2. The protein operates within nucleotide-sugar biosynthesis; UDP-N-acetyl-alpha-D-glucosamine biosynthesis; UDP-N-acetyl-alpha-D-glucosamine from N-acetyl-alpha-D-glucosamine 1-phosphate: step 1/1. It participates in bacterial outer membrane biogenesis; LPS lipid A biosynthesis. In terms of biological role, catalyzes the last two sequential reactions in the de novo biosynthetic pathway for UDP-N-acetylglucosamine (UDP-GlcNAc). The C-terminal domain catalyzes the transfer of acetyl group from acetyl coenzyme A to glucosamine-1-phosphate (GlcN-1-P) to produce N-acetylglucosamine-1-phosphate (GlcNAc-1-P), which is converted into UDP-GlcNAc by the transfer of uridine 5-monophosphate (from uridine 5-triphosphate), a reaction catalyzed by the N-terminal domain. This chain is Bifunctional protein GlmU, found in Staphylococcus aureus (strain MRSA252).